Consider the following 254-residue polypeptide: Proteasome activator complex subunit 3 (254 aa).

Residues K6 and K14 each carry the N6-acetyllysine modification. K195 bears the N6-acetyllysine; by P300/CBP mark.

In terms of assembly, homoheptamer. Acetylation at the major site Lys-195 is important for oligomerization and ability to degrade its target substrates. Deacetylated by SIRT1.

Functionally, implicated in immunoproteasome assembly and required for efficient antigen processing. The PA28 activator complex enhances the generation of class I binding peptides by altering the cleavage pattern of the proteasome. The sequence is that of Proteasome activator complex subunit 3 from Gallus gallus (Chicken).